The following is a 464-amino-acid chain: Fumarate hydratase class II (464 aa).

Substrate-binding positions include 98-100, arginine 126, 129-132, 139-141, and threonine 187; these read SGT, HPND, and SSN. The Proton donor/acceptor role is filled by histidine 188. Serine 318 is a catalytic residue. Residues serine 319 and 324-326 contribute to the substrate site; that span reads KVN.

Belongs to the class-II fumarase/aspartase family. Fumarase subfamily. Homotetramer.

Its subcellular location is the cytoplasm. The enzyme catalyses (S)-malate = fumarate + H2O. The protein operates within carbohydrate metabolism; tricarboxylic acid cycle; (S)-malate from fumarate: step 1/1. Functionally, involved in the TCA cycle. Catalyzes the stereospecific interconversion of fumarate to L-malate. This is Fumarate hydratase class II from Photorhabdus laumondii subsp. laumondii (strain DSM 15139 / CIP 105565 / TT01) (Photorhabdus luminescens subsp. laumondii).